Consider the following 174-residue polypeptide: Keratin-associated protein 1-5 (174 aa).

The segment at Cys-3–Pro-172 is 15 X 5 AA repeats of C-C-[QEPVRC]-[TPIVLE]-[SRHVP].

The protein belongs to the KRTAP type 1 family. As to quaternary structure, interacts with hair keratins. As to expression, expressed in the middle/upper portions of the hair cortex, in the region termed the keratogenous zone.

In terms of biological role, in the hair cortex, hair keratin intermediate filaments are embedded in an interfilamentous matrix, consisting of hair keratin-associated proteins (KRTAP), which are essential for the formation of a rigid and resistant hair shaft through their extensive disulfide bond cross-linking with abundant cysteine residues of hair keratins. The matrix proteins include the high-sulfur and high-glycine-tyrosine keratins. This chain is Keratin-associated protein 1-5 (KRTAP1-5), found in Homo sapiens (Human).